The chain runs to 412 residues: DNA utilization protein HofQ (412 aa).

The N-terminal stretch at M1 to A18 is a signal peptide.

This sequence belongs to the bacterial secretin family. PilQ subfamily.

It is found in the cell outer membrane. Functionally, required for the use of extracellular DNA as a nutrient. Could be the porin responsible for transport of DNA across the outer membrane. The chain is DNA utilization protein HofQ (hofQ) from Escherichia coli (strain K12).